Consider the following 312-residue polypeptide: Salivary protein SG34 (312 aa).

Positions 1–20 (MSPSKKILVLLLFPILLVSS) are cleaved as a signal peptide. Residues 95 to 158 (NMEVQLLRES…QEEIEEQTKQ (64 aa)) are a coiled coil.

Belongs to the salivary protein SG34 family. As to expression, female salivary gland (at protein level). Low-level expression in ovary.

Possible serine protease. In terms of biological role, (Microbial infection) Modulates replication of duck Tembusu virus in salivary glands and virus release into the saliva, probably via the regulation of antimicrobial peptides expression in response to virus infection. Functionally, (Microbial infection) Enhances replication of dengue virus type 2 in human keratinocytes, probably by suppressing the production of type I interferons and antimicrobial peptides in response to virus infection. The polypeptide is Salivary protein SG34 (Aedes aegypti (Yellowfever mosquito)).